Consider the following 435-residue polypeptide: 3-ketoacyl-CoA thiolase (435 aa).

Residue cysteine 98 is the Acyl-thioester intermediate of the active site. Catalysis depends on proton acceptor residues histidine 391 and cysteine 421.

Belongs to the thiolase-like superfamily. Thiolase family. As to quaternary structure, heterotetramer of two alpha chains (FadJ) and two beta chains (FadI).

The protein localises to the cytoplasm. The catalysed reaction is an acyl-CoA + acetyl-CoA = a 3-oxoacyl-CoA + CoA. Its pathway is lipid metabolism; fatty acid beta-oxidation. Catalyzes the final step of fatty acid oxidation in which acetyl-CoA is released and the CoA ester of a fatty acid two carbons shorter is formed. In Vibrio vulnificus (strain YJ016), this protein is 3-ketoacyl-CoA thiolase.